The primary structure comprises 185 residues: Ribosome-recycling factor (185 aa).

Belongs to the RRF family.

Its subcellular location is the cytoplasm. Its function is as follows. Responsible for the release of ribosomes from messenger RNA at the termination of protein biosynthesis. May increase the efficiency of translation by recycling ribosomes from one round of translation to another. This Aliivibrio fischeri (strain MJ11) (Vibrio fischeri) protein is Ribosome-recycling factor.